The following is a 176-amino-acid chain: Large ribosomal subunit protein bL28m (176 aa).

The N-terminal 8 residues, methionine 1–lysine 8, are a transit peptide targeting the mitochondrion.

The protein belongs to the bacterial ribosomal protein bL28 family. In terms of assembly, component of the mitochondrial large ribosomal subunit (mt-LSU). Mature yeast 74S mitochondrial ribosomes consist of a small (37S) and a large (54S) subunit. The 37S small subunit contains a 15S ribosomal RNA (15S mt-rRNA) and at least 32 different proteins. The 54S large subunit contains a 21S rRNA (21S mt-rRNA) and at least 45 different proteins.

The protein localises to the cytoplasm. Its subcellular location is the mitochondrion. In terms of biological role, component of the mitochondrial ribosome (mitoribosome), a dedicated translation machinery responsible for the synthesis of mitochondrial genome-encoded proteins, including at least some of the essential transmembrane subunits of the mitochondrial respiratory chain. The mitoribosomes are attached to the mitochondrial inner membrane and translation products are cotranslationally integrated into the membrane. The sequence is that of Large ribosomal subunit protein bL28m (mrpl24) from Schizosaccharomyces pombe (strain 972 / ATCC 24843) (Fission yeast).